The primary structure comprises 593 residues: MDRFSRKCLLFLLLIILLDSPLTCHSWGWFSSSSSSAEDPYSSSFSRSRKSNPDFSMEVFSDQKAVQVLENKLVGLTSCWQNAYSYLLAGCKETIATEEKRKRFAWYLSDCFIKDSGRPAFPTCKDESVMMSCLKKLDDHEHKIYLDFLLETNTICQQLQSNAFKNEIERLVNELKNTAQYTEDKLDILESKSDALIQTSSMIHDSLGSLDVRVQNVASVTNTLETSVSGLSQQTVEISQEQKNIAESQLALRDGQVKMKETLKDGMDMFLDAYTNIQEGVDKLKSDTEQIEVEISVLGNNLSTKMIDLQSTTDDIGTKTRSSLDKQQKLLDGQTVALDGIQFLTRFQSEALQESRNTLQRLKEFSQEQQEDLAKRQEKLQEVHDHLFENSKSMLEAQVAFEAKQANMFVALDKLFALHNAMLLESRVIKAFVIYFLSIFVIYMFTSTKQTYIIRPRLYIGLCVTLALEVASLRYVNDTERQAWMINLIRSLFALLASAQLLHAALSYRDYEVLNHQILLRLVDKVNDMQSKKELSYDEDTESEVDWTSWVDTDLTDDDDNLADPDYKIPLLIKDNPVTTSSLTRRLYNFRPR.

A signal peptide spans 1–24 (MDRFSRKCLLFLLLIILLDSPLTC). Residues 25–427 (HSWGWFSSSS…LHNAMLLESR (403 aa)) are Extracellular-facing. 2 coiled-coil regions span residues 156–194 (CQQL…SKSD) and 350–387 (EALQ…HDHL). The chain crosses the membrane as a helical span at residues 428–448 (VIKAFVIYFLSIFVIYMFTST). At 449–457 (KQTYIIRPR) the chain is on the cytoplasmic side. The chain crosses the membrane as a helical span at residues 458-476 (LYIGLCVTLALEVASLRYV). Residues 477 to 485 (NDTERQAWM) are Extracellular-facing. The chain crosses the membrane as a helical span at residues 486-506 (INLIRSLFALLASAQLLHAAL). At 507 to 593 (SYRDYEVLNH…TRRLYNFRPR (87 aa)) the chain is on the cytoplasmic side.

In terms of assembly, homodimer. In tricellular pollen, expressed in mature sperm cells. Not expressed in bicellular or unicellular pollen. Detected in ovules, roots and guard cells. Expressed in the embryo sac before cellularization, in the egg cell after cellularization, in the zygote/embryo immediately after fertilization and in the pollen vegetative cell.

It is found in the cell membrane. Has a dual function during gametophyte development and early embryogenesis. Required for correct pollen maturation. The polypeptide is Protein GAMETE EXPRESSED 1 (GEX1) (Arabidopsis thaliana (Mouse-ear cress)).